Consider the following 228-residue polypeptide: MQKLKQQVFEANMDLPRYGLVTFTWGNVSAIDRERGLVVIKPSGIAYESMKANDMVVVDMSGKVVEGEYRPSSDTATHLELYRRYPSLGGIVHTHSTHATAWAQAGLAIPALGTTHADYFFGDIPCTRGLSEEEVQGEYELNTGKVIIETLGDAEPLHTPGIVVYQHGPFAWGKDAHDAVHNAVVMEEVAKMAWIARGINPQLNHIDSYLMNKHFMRKHGPNAYYGQK.

Residues 26 to 27 (GN), 43 to 44 (SG), and 72 to 73 (SS) each bind substrate. Asp-74, His-93, and His-95 together coordinate Zn(2+). Asp-118 functions as the Proton donor/acceptor in the catalytic mechanism. His-167 is a Zn(2+) binding site. The active-site Proton donor/acceptor is Tyr-225.

Belongs to the aldolase class II family. AraD/FucA subfamily. The cofactor is Zn(2+).

It carries out the reaction L-ribulose 5-phosphate = D-xylulose 5-phosphate. It participates in cofactor degradation; L-ascorbate degradation; D-xylulose 5-phosphate from L-ascorbate: step 4/4. Its function is as follows. Catalyzes the isomerization of L-ribulose 5-phosphate to D-xylulose 5-phosphate. Is involved in the anaerobic L-ascorbate utilization. The chain is L-ribulose-5-phosphate 4-epimerase UlaF from Escherichia fergusonii (strain ATCC 35469 / DSM 13698 / CCUG 18766 / IAM 14443 / JCM 21226 / LMG 7866 / NBRC 102419 / NCTC 12128 / CDC 0568-73).